Consider the following 161-residue polypeptide: Cytochrome c-type biogenesis protein CcmE (161 aa).

At 1 to 8 (MNARRKKR) the chain is on the cytoplasmic side. The helical; Signal-anchor for type II membrane protein transmembrane segment at 9–29 (LTLAVALIGGVAAIASLLLYA) threads the bilayer. The Periplasmic segment spans residues 30–161 (LNSNLNLFYT…DYNEQQKTSY (132 aa)). His-131 and Tyr-135 together coordinate heme.

Belongs to the CcmE/CycJ family.

The protein resides in the cell inner membrane. Functionally, heme chaperone required for the biogenesis of c-type cytochromes. Transiently binds heme delivered by CcmC and transfers the heme to apo-cytochromes in a process facilitated by CcmF and CcmH. The chain is Cytochrome c-type biogenesis protein CcmE from Shewanella sediminis (strain HAW-EB3).